The primary structure comprises 267 residues: Cytochrome b (267 aa).

A run of 4 helical transmembrane segments spans residues 4–24, 48–69, 84–104, and 149–169; these read FGSL…LLAA, WLIR…YLHI, WNTG…GYVL, and FFTL…IHLT. Residues His-54 and His-68 each coordinate heme b. Residues His-153 and His-167 each contribute to the heme b site. Residue His-172 coordinates a ubiquinone. 2 helical membrane passes run 197-217 and 259-267; these read LKDI…ALFA and LGGVLALAA.

This sequence belongs to the cytochrome b family. The cytochrome bc1 complex contains 11 subunits: 3 respiratory subunits (MT-CYB, CYC1 and UQCRFS1), 2 core proteins (UQCRC1 and UQCRC2) and 6 low-molecular weight proteins (UQCRH/QCR6, UQCRB/QCR7, UQCRQ/QCR8, UQCR10/QCR9, UQCR11/QCR10 and a cleavage product of UQCRFS1). This cytochrome bc1 complex then forms a dimer. Heme b is required as a cofactor.

It localises to the mitochondrion inner membrane. Component of the ubiquinol-cytochrome c reductase complex (complex III or cytochrome b-c1 complex) that is part of the mitochondrial respiratory chain. The b-c1 complex mediates electron transfer from ubiquinol to cytochrome c. Contributes to the generation of a proton gradient across the mitochondrial membrane that is then used for ATP synthesis. This is Cytochrome b (MT-CYB) from Raphus cucullatus (Dodo).